Here is a 299-residue protein sequence, read N- to C-terminus: MRVFFFGGKGGVGKTTASSAFAVKLSEQGKKVLLLSTDPAHSLSDVFNTELQGETKLSENLTVKEIDLNEELKEYRSRVFKLAEATLRKETLRELEGIIHSLEESPGIEDVVIFEALSKEVVYRENEYDYIVVDTAPTGHTLGLLKTVRNLGNFLEEIVKLKEKVYELKKLSGKSVHEEALEYLKERKERFKKFSEIIYDKSYFFAVLTPEKLPFEETKRLVNSLKHYGIRVKALIINKVLPENPQDEFLKARKEVEKKFLKEIENYFMDIEKISIPYQKEEVVGYEKLKEFSKFLPLG.

An ATP-binding site is contributed by 8–15 (GKGGVGKT).

This sequence belongs to the arsA ATPase family.

It carries out the reaction arsenite(in) + ATP + H2O = arsenite(out) + ADP + phosphate + H(+). Functionally, anion-transporting ATPase. Catalyzes the extrusion of arsenite. The sequence is that of Putative arsenical pump-driving ATPase 2 (arsA2) from Aquifex aeolicus (strain VF5).